Here is a 298-residue protein sequence, read N- to C-terminus: Probable tRNA(His) guanylyltransferase (298 aa).

D58, G59, and D105 together coordinate Mg(2+). GTP is bound by residues D58 to H63 and S104 to D105.

This sequence belongs to the tRNA(His) guanylyltransferase family. In terms of assembly, homotetramer. Interacts with MFN1 and MFN2; functions as a guanyl-nucleotide exchange factor/GEF for MFN2 and also probably MFN1. It depends on Mg(2+) as a cofactor. As to expression, expressed in many tissues.

The protein resides in the cytoplasm. The protein localises to the mitochondrion outer membrane. It carries out the reaction a 5'-end ribonucleotide-tRNA(His) + GTP + ATP + H2O = a 5'-end phospho-guanosine-ribonucleotide-tRNA(His) + AMP + 2 diphosphate + H(+). Its function is as follows. Adds a GMP to the 5'-end of tRNA(His) after transcription and RNase P cleavage. This step is essential for proper recognition of the tRNA and for the fidelity of protein synthesis. Also functions as a guanyl-nucleotide exchange factor/GEF for the MFN1 and MFN2 mitofusins thereby regulating mitochondrial fusion. By regulating both mitochondrial dynamics and bioenergetic function, it contributes to cell survival following oxidative stress. The chain is Probable tRNA(His) guanylyltransferase (THG1L) from Homo sapiens (Human).